The sequence spans 400 residues: CCA-adding enzyme (400 aa).

ATP-binding residues include Gly28 and Arg31. CTP is bound by residues Gly28 and Arg31. Asp41 and Asp43 together coordinate Mg(2+). The ATP site is built by Arg112, Asp155, Arg158, Arg161, and Arg164. CTP is bound by residues Arg112, Asp155, Arg158, Arg161, and Arg164.

It belongs to the tRNA nucleotidyltransferase/poly(A) polymerase family. Bacterial CCA-adding enzyme type 3 subfamily. Homodimer. It depends on Mg(2+) as a cofactor.

It catalyses the reaction a tRNA precursor + 2 CTP + ATP = a tRNA with a 3' CCA end + 3 diphosphate. The enzyme catalyses a tRNA with a 3' CCA end + 2 CTP + ATP = a tRNA with a 3' CCACCA end + 3 diphosphate. Functionally, catalyzes the addition and repair of the essential 3'-terminal CCA sequence in tRNAs without using a nucleic acid template. Adds these three nucleotides in the order of C, C, and A to the tRNA nucleotide-73, using CTP and ATP as substrates and producing inorganic pyrophosphate. tRNA 3'-terminal CCA addition is required both for tRNA processing and repair. Also involved in tRNA surveillance by mediating tandem CCA addition to generate a CCACCA at the 3' terminus of unstable tRNAs. While stable tRNAs receive only 3'-terminal CCA, unstable tRNAs are marked with CCACCA and rapidly degraded. The chain is CCA-adding enzyme from Staphylococcus aureus (strain MSSA476).